The following is a 390-amino-acid chain: Chalcone synthase (390 aa).

Residue C164 is part of the active site.

The protein belongs to the thiolase-like superfamily. Chalcone/stilbene synthases family.

It catalyses the reaction (E)-4-coumaroyl-CoA + 3 malonyl-CoA + 3 H(+) = 2',4,4',6'-tetrahydroxychalcone + 3 CO2 + 4 CoA. The protein operates within secondary metabolite biosynthesis; flavonoid biosynthesis. Its function is as follows. The primary product of this enzyme is 4,2',4',6'-tetrahydroxychalcone (also termed naringenin-chalcone or chalcone) which undergoes enzyme-catalyzed or spontaneous isomerization into naringenin. In Hypericum androsaemum (Tutsan), this protein is Chalcone synthase.